The sequence spans 130 residues: Glycoprotein hormone alpha-2 (130 aa).

The signal sequence occupies residues 1 to 22 (MPMAPRVLLFCLLGLAVTEGHG). 4 disulfides stabilise this stretch: Cys32–Cys90, Cys49–Cys104, Cys58–Cys120, and Cys62–Cys122. N-linked (GlcNAc...) asparagine glycosylation is found at Asn38 and Asn82.

It belongs to the glycoprotein hormones subunit alpha family. As to quaternary structure, heterodimer with GPHB5; this heterodimer interacts with thyroid-stimulating hormone receptor (TSHR), and hence stimulates cAMP production.

The protein localises to the secreted. Functions as a heterodimeric glycoprotein hormone with GPHB5 able to bind and activate the thyroid-stimulating hormone receptor (TSHR), leading to increased cAMP production. Plays a central role in controlling thyroid cell metabolism. The polypeptide is Glycoprotein hormone alpha-2 (Gpha2) (Rattus norvegicus (Rat)).